Here is a 498-residue protein sequence, read N- to C-terminus: UPF0371 protein cauri_2449 (498 aa).

It belongs to the UPF0371 family.

This chain is UPF0371 protein cauri_2449, found in Corynebacterium aurimucosum (strain ATCC 700975 / DSM 44827 / CIP 107346 / CN-1) (Corynebacterium nigricans).